The primary structure comprises 151 residues: MLP-like protein 168 (151 aa).

This sequence belongs to the MLP family.

The protein is MLP-like protein 168 (MLP168) of Arabidopsis thaliana (Mouse-ear cress).